Here is a 1036-residue protein sequence, read N- to C-terminus: Pre-mRNA-processing factor 39-2 (1036 aa).

Positions 1-24 (MVTTEVRTAVSDKEPLQRSPELDS) are disordered. HAT repeat units lie at residues 62 to 94 (DDIE…HKIK), 96 to 128 (CTLE…FAVA), 131 to 166 (EDPH…YLLG), 168 to 201 (QQWS…IAAS), 278 to 310 (CFET…FGET), and 312 to 344 (GDFD…FVES). Disordered regions lie at residues 595 to 618 (GISS…YGTQ), 714 to 767 (PSGS…PVGT), and 995 to 1036 (KGDE…ISSI). Positions 714 to 726 (PSGSQSPQSYQSQ) are enriched in low complexity. Residues 740-755 (RDLNQMHRDSKPRSQE) show a composition bias toward basic and acidic residues. The span at 1002-1036 (SMPQGSTTNSDIQKSQESGAVNEANLSSDTSISSI) shows a compositional bias: polar residues.

This sequence belongs to the PRP39 family.

The protein localises to the nucleus. Functionally, involved in pre-mRNA splicing. This Arabidopsis thaliana (Mouse-ear cress) protein is Pre-mRNA-processing factor 39-2.